Reading from the N-terminus, the 776-residue chain is MLQALLTVSLLLSPVPVSAIKELPGVKKYEVVYPIRLHPLHKREVKEPEQQEQFETELKYKMTVNGKIAVLYLKKNKNLLAPGYTETYYNSTGKEITTSPQIMDDCYYQGHIINEKDSDASISTCRGLRGYFSQGNQRYFIEPLSPIHRDGQEHALFKYDPEEKNYDSTCGTDGVLWVHDLQNIARPATRLVKLNDGKVQKHEKYIEYYLVLDNGEFKKYNENQDEIRKRVFEMANYVNMLYKKLNTHVALVGMEIWTDEDKINITPNASFTLENFSKWRGSVLPRRKRHDIAQLITATEFAGMTVGLAFMSTMCSPYHSVGVVQDHSDNLLRVAGTMAHEMGHNFGMFHDNYSCKCPSTICVMDKALSFYIPTDFSSCSRVSYDKFFEDKLSNCLFNAPLPTDIISTPICGNQMVEMGEDCDCGTSEECTNICCDAKTCKIKAGFQCTSGECCEKCQFKKAGMVCRPAKDECDLPEMCDGKSGNCPDDRFRANGFPCHHGKGYCLMGACPTLQEQCTELWGPGTKVADQSCYNRNEGGSKYGYCRRVDDTLIPCKTNDTMCGKLFCQGGSDNLPWKGRIVTFLTCKTFDPEDTSEEIGMVANGTKCGHNKVCINAECVDIEKAYKSTNCSSKCKGHAVCDHELQCQCEEGWSPPDCDDSSVVFYFSIVVAVLFPVAVISLVVAIVIRQQSSREKQKKDQRPLSTTGTRPHKQKRKPQMVKAVQPQEMSQMKLHVYDLPVEGNEPPASFLISKPDFSPPPIPAPRSSSFLDSNPKA.

An N-terminal signal peptide occupies residues 1 to 19 (MLQALLTVSLLLSPVPVSA). A propeptide spanning residues 20–193 (IKELPGVKKY…IARPATRLVK (174 aa)) is cleaved from the precursor. The short motif at 168–175 (STCGTDGV) is the Cysteine switch element. C170 serves as a coordination point for Zn(2+). Topologically, residues 194-666 (LNDGKVQKHE…CDDSSVVFYF (473 aa)) are extracellular. Residues 204-400 (KYIEYYLVLD…KLSNCLFNAP (197 aa)) form the Peptidase M12B domain. N-linked (GlcNAc...) asparagine glycans are attached at residues N268 and N275. 4 cysteine pairs are disulfide-bonded: C315–C395, C355–C379, C357–C362, and C466–C486. H340 serves as a coordination point for Zn(2+). E341 is a catalytic residue. Zn(2+)-binding residues include H344 and H350. An N-linked (GlcNAc...) asparagine glycan is attached at N352. The Disintegrin domain maps to 408–494 (TPICGNQMVE…NCPDDRFRAN (87 aa)). N-linked (GlcNAc...) asparagine glycosylation is found at N558, N603, and N629. In terms of domain architecture, EGF-like spans 626 to 658 (KSTNCSSKCKGHAVCDHELQCQCEEGWSPPDCD). 3 disulfides stabilise this stretch: C630/C640, C634/C646, and C648/C657. The chain crosses the membrane as a helical span at residues 667 to 687 (SIVVAVLFPVAVISLVVAIVI). The Cytoplasmic portion of the chain corresponds to 688–776 (RQQSSREKQK…SSFLDSNPKA (89 aa)). Positions 691 to 701 (SSREKQKKDQR) are enriched in basic and acidic residues. Disordered regions lie at residues 691-728 (SSRE…PQEM) and 746-776 (PASF…NPKA). A compositionally biased stretch (basic residues) spans 709–718 (RPHKQKRKPQ).

It depends on Zn(2+) as a cofactor. In terms of processing, pro-domain removal and maturation may be, at least in part, autocatalytic. As to expression, expressed at high levels in epididymis and at lower levels in lung.

The protein resides in the membrane. Its function is as follows. May play a role in the adhesive and proteolytic events that occur during lymphocyte emigration or may function in ectodomain shedding of lymphocyte surface target proteins, such as FASL and CD40L. May be involved in sperm maturation. This is Disintegrin and metalloproteinase domain-containing protein 28 (ADAM28) from Macaca fascicularis (Crab-eating macaque).